The chain runs to 233 residues: Phosphonates import ATP-binding protein PhnC 1 (233 aa).

One can recognise an ABC transporter domain in the interval L2 to I227. G34–T41 lines the ATP pocket.

The protein belongs to the ABC transporter superfamily. Phosphonates importer (TC 3.A.1.9.1) family. In terms of assembly, the complex is composed of two ATP-binding proteins (PhnC), two transmembrane proteins (PhnE) and a solute-binding protein (PhnD).

Its subcellular location is the cell membrane. It catalyses the reaction phosphonate(out) + ATP + H2O = phosphonate(in) + ADP + phosphate + H(+). Its function is as follows. Part of the ABC transporter complex PhnCDE involved in phosphonates import. Responsible for energy coupling to the transport system. This chain is Phosphonates import ATP-binding protein PhnC 1, found in Natronomonas pharaonis (strain ATCC 35678 / DSM 2160 / CIP 103997 / JCM 8858 / NBRC 14720 / NCIMB 2260 / Gabara) (Halobacterium pharaonis).